Here is a 221-residue protein sequence, read N- to C-terminus: Histidine biosynthesis bifunctional protein HisIE (221 aa).

The interval 1 to 121 (MNITKIDWQK…KKQQFANWAW (121 aa)) is phosphoribosyl-AMP cyclohydrolase. Residues 122–221 (FIKLEQHLKE…IGLHPEGGNK (100 aa)) are phosphoribosyl-ATP pyrophosphohydrolase.

This sequence in the N-terminal section; belongs to the PRA-CH family. The protein in the C-terminal section; belongs to the PRA-PH family.

The protein localises to the cytoplasm. It catalyses the reaction 1-(5-phospho-beta-D-ribosyl)-ATP + H2O = 1-(5-phospho-beta-D-ribosyl)-5'-AMP + diphosphate + H(+). The enzyme catalyses 1-(5-phospho-beta-D-ribosyl)-5'-AMP + H2O = 1-(5-phospho-beta-D-ribosyl)-5-[(5-phospho-beta-D-ribosylamino)methylideneamino]imidazole-4-carboxamide. Its pathway is amino-acid biosynthesis; L-histidine biosynthesis; L-histidine from 5-phospho-alpha-D-ribose 1-diphosphate: step 2/9. It functions in the pathway amino-acid biosynthesis; L-histidine biosynthesis; L-histidine from 5-phospho-alpha-D-ribose 1-diphosphate: step 3/9. The polypeptide is Histidine biosynthesis bifunctional protein HisIE (hisI) (Haemophilus influenzae (strain ATCC 51907 / DSM 11121 / KW20 / Rd)).